A 1016-amino-acid polypeptide reads, in one-letter code: Probable outer membrane protein PmpH (1016 aa).

The N-terminal stretch at 1 to 24 (MPFSLRSTSFCFLACLCSYSYGFA) is a signal peptide. The region spanning 697-1016 (GELVPNSLWV…FVSMGLNRIF (320 aa)) is the Autotransporter domain.

The protein belongs to the PMP outer membrane protein family.

It localises to the secreted. The protein resides in the cell wall. It is found in the cell outer membrane. This Chlamydia trachomatis serovar D (strain ATCC VR-885 / DSM 19411 / UW-3/Cx) protein is Probable outer membrane protein PmpH (pmpH).